Consider the following 175-residue polypeptide: Peptidyl-prolyl cis-trans isomerase B (175 aa).

The 170-residue stretch at 3 to 172 (EQLYATLKTN…EDVVIESVVV (170 aa)) folds into the PPIase cyclophilin-type domain.

This sequence belongs to the cyclophilin-type PPIase family.

Its subcellular location is the cytoplasm. The catalysed reaction is [protein]-peptidylproline (omega=180) = [protein]-peptidylproline (omega=0). Its activity is regulated as follows. Inhibited by cyclosporin A (CsA). PPIases accelerate the folding of proteins. It catalyzes the cis-trans isomerization of proline imidic peptide bonds in oligopeptides. The polypeptide is Peptidyl-prolyl cis-trans isomerase B (cypB) (Streptomyces anulatus (Streptomyces chrysomallus)).